Reading from the N-terminus, the 100-residue chain is Integration host factor subunit alpha (100 aa).

The protein belongs to the bacterial histone-like protein family. In terms of assembly, heterodimer of an alpha and a beta chain.

Functionally, this protein is one of the two subunits of integration host factor, a specific DNA-binding protein that functions in genetic recombination as well as in transcriptional and translational control. The polypeptide is Integration host factor subunit alpha (Ectopseudomonas mendocina (strain ymp) (Pseudomonas mendocina)).